The primary structure comprises 729 residues: Sodium-dependent neutral amino acid transporter B(0)AT2 (729 aa).

Residues 1–69 (MPKNSKVVKR…ERPAWNSKLQ (69 aa)) lie on the Cytoplasmic side of the membrane. Ser25 and Ser55 each carry phosphoserine. Residues 42–61 (DVQEEKDTDAEDGSEADDER) are disordered. Over residues 43 to 59 (VQEEKDTDAEDGSEADD) the composition is skewed to acidic residues. A run of 3 helical transmembrane segments spans residues 70–90 (YILAQVGFSVGLGNVWRFPYL), 98–117 (AYLLPYLILLLVIGIPLFFL), and 142–162 (GIGFASCVVCYFVALYYNVII). Over 163–225 (GWTLFYFSQS…SSISDSGGLN (63 aa)) the chain is Extracellular. N-linked (GlcNAc...) asparagine glycosylation occurs at Asn187. Helical transmembrane passes span 226 to 244 (WKMTVCLLVAWVMVCLAMI) and 253 to 270 (IMYFSSLFPYVVLICFLI). An N-linked (GlcNAc...) asparagine glycan is attached at Asn276. Helical transmembrane passes span 306–323 (VFFALGLGFGGVIAFSSY) and 335–356 (VLVSFINFFTSVLATLVVFAVL). Over 357 to 452 (GFKANIVNEK…FIAFTEAMTH (96 aa)) the chain is Extracellular. N-linked (GlcNAc...) asparagine glycosylation is found at Asn383 and Asn394. 5 helical membrane-spanning segments follow: residues 453–472 (FPASPFWSVMFFLMLINLGL), 496–514 (ILTVICCLLAFCIGLIFVQ), 530–550 (TLPLLIVVILENIAVSFVYGI), 571–592 (YMWKYISPLMLLTLLIASIVNM), and 620–642 (VVCFSLMVLAILPVPVVFIIRRC). The Cytoplasmic segment spans residues 643–729 (NLIDDSSGNL…DMPDMPESDL (87 aa)). Residues Ser687, Ser699, and Ser701 each carry the phosphoserine modification.

Belongs to the sodium:neurotransmitter symporter (SNF) (TC 2.A.22) family. SLC6A15 subfamily. Significant expressed in brain, lung and kidney. In brain, mainly expressed int the cortex, the cerebellum and the brain stem.

The protein localises to the membrane. It catalyses the reaction L-pipecolate(in) + Na(+)(in) = L-pipecolate(out) + Na(+)(out). The enzyme catalyses L-leucine(in) + Na(+)(in) = L-leucine(out) + Na(+)(out). It carries out the reaction L-isoleucine(in) + Na(+)(in) = L-isoleucine(out) + Na(+)(out). The catalysed reaction is L-methionine(in) + Na(+)(in) = L-methionine(out) + Na(+)(out). It catalyses the reaction L-proline(in) + Na(+)(in) = L-proline(out) + Na(+)(out). The enzyme catalyses L-alanine(in) + Na(+)(in) = L-alanine(out) + Na(+)(out). It carries out the reaction L-asparagine(in) + Na(+)(in) = L-asparagine(out) + Na(+)(out). The catalysed reaction is L-valine(in) + Na(+)(in) = L-valine(out) + Na(+)(out). It catalyses the reaction L-cysteine(in) + Na(+)(in) = L-cysteine(out) + Na(+)(out). The enzyme catalyses L-glutamine(in) + Na(+)(in) = L-glutamine(out) + Na(+)(out). It carries out the reaction L-serine(in) + Na(+)(in) = L-serine(out) + Na(+)(out). The catalysed reaction is L-threonine(in) + Na(+)(in) = L-threonine(out) + Na(+)(out). It catalyses the reaction L-phenylalanine(in) + Na(+)(in) = L-phenylalanine(out) + Na(+)(out). Functionally, functions as a sodium-dependent neutral amino acid transporter. Exhibits preference for methionine and for the branched-chain amino acids, particularly leucine, valine and isoleucine. Can also transport low-affinity substrates such as alanine, phenylalanine, glutamine and pipecolic acid. Mediates the saturable, pH-sensitive and electrogenic cotransport of proline and sodium ions with a stoichiometry of 1:1. May have a role as transporter for neurotransmitter precursors into neurons. In contrast to other members of the neurotransmitter transporter family, does not appear to be chloride-dependent. The sequence is that of Sodium-dependent neutral amino acid transporter B(0)AT2 (Slc6a15) from Mus musculus (Mouse).